Reading from the N-terminus, the 150-residue chain is S-protein homolog 24 (150 aa).

Asn122 carries an N-linked (GlcNAc...) asparagine glycan.

This sequence belongs to the plant self-incompatibility (S1) protein family.

The protein localises to the secreted. The protein is S-protein homolog 24 of Arabidopsis thaliana (Mouse-ear cress).